Consider the following 170-residue polypeptide: Transcription factor E (170 aa).

In terms of domain architecture, HTH TFE/IIEalpha-type spans 1-93 (MKDVYLYIVE…TWYVDDEIIK (93 aa)).

This sequence belongs to the TFE family. As to quaternary structure, monomer. Interaction with RNA polymerase subunits RpoF and RpoE is necessary for Tfe stimulatory transcription activity. Able to interact with Tbp and RNA polymerase in the absence of DNA promoter. Interacts both with the preinitiation and elongation complexes.

In terms of biological role, transcription factor that plays a role in the activation of archaeal genes transcribed by RNA polymerase. Facilitates transcription initiation by enhancing TATA-box recognition by TATA-box-binding protein (Tbp), and transcription factor B (Tfb) and RNA polymerase recruitment. Not absolutely required for transcription in vitro, but particularly important in cases where Tbp or Tfb function is not optimal. It dynamically alters the nucleic acid-binding properties of RNA polymerases by stabilizing the initiation complex and destabilizing elongation complexes. Seems to translocate with the RNA polymerase following initiation and acts by binding to the non template strand of the transcription bubble in elongation complexes. In Pyrobaculum aerophilum (strain ATCC 51768 / DSM 7523 / JCM 9630 / CIP 104966 / NBRC 100827 / IM2), this protein is Transcription factor E.